The chain runs to 47 residues: Exoenzymes regulatory protein AepH (47 aa).

Basic and acidic residues-rich tracts occupy residues 1 to 17 (MGQE…QDGH) and 33 to 47 (TKKE…DANV). Positions 1 to 47 (MGQEPKGIESRKIQDGHVRKKVGRQQGLWVRTTKKEKFSRMSRDANV) are disordered.

Functionally, involved in the control of extracellular enzymes production. Stimulates PEL, PEH, CEL, and PRT production. The protein is Exoenzymes regulatory protein AepH (aepH) of Pectobacterium carotovorum subsp. carotovorum (Erwinia carotovora subsp. carotovora).